The sequence spans 274 residues: MAVKSYKPYTPSRRFMTTLDNSDITSKPTVKKLLIKLPQKAGRNNLGRITSRHREAGAKKLYRIIDFKRNKFGVPGKVATVEYDPYRNCRICLISYVDGDKRYIIQPEGLKVGDTVMAAEAGLDIKPGNAMKLKNIPVGTVVHNVEMKPGKGGQIARSAGNSCQIMGREGKYVILRLPSGEMRYILGECMATIGTVGNAEYQNITIGKAGRSRHLGIRPQTRGIAMNPVDHPHGGGEGRSKGNHPVTPWGMPTKGYKTRKKKQSDKYIISRRKK.

The interval 223-274 is disordered; the sequence is GIAMNPVDHPHGGGEGRSKGNHPVTPWGMPTKGYKTRKKKQSDKYIISRRKK. Basic and acidic residues predominate over residues 230–240; it reads DHPHGGGEGRS. Residues 256–274 are compositionally biased toward basic residues; it reads YKTRKKKQSDKYIISRRKK.

The protein belongs to the universal ribosomal protein uL2 family. Part of the 50S ribosomal subunit. Forms a bridge to the 30S subunit in the 70S ribosome.

In terms of biological role, one of the primary rRNA binding proteins. Required for association of the 30S and 50S subunits to form the 70S ribosome, for tRNA binding and peptide bond formation. It has been suggested to have peptidyltransferase activity; this is somewhat controversial. Makes several contacts with the 16S rRNA in the 70S ribosome. The polypeptide is Large ribosomal subunit protein uL2 (Nautilia profundicola (strain ATCC BAA-1463 / DSM 18972 / AmH)).